Consider the following 307-residue polypeptide: Methionyl-tRNA formyltransferase (307 aa).

A (6S)-5,6,7,8-tetrahydrofolate-binding site is contributed by 108 to 111 (SLLP).

This sequence belongs to the Fmt family.

It catalyses the reaction L-methionyl-tRNA(fMet) + (6R)-10-formyltetrahydrofolate = N-formyl-L-methionyl-tRNA(fMet) + (6S)-5,6,7,8-tetrahydrofolate + H(+). Its function is as follows. Attaches a formyl group to the free amino group of methionyl-tRNA(fMet). The formyl group appears to play a dual role in the initiator identity of N-formylmethionyl-tRNA by promoting its recognition by IF2 and preventing the misappropriation of this tRNA by the elongation apparatus. This Xanthomonas campestris pv. campestris (strain 8004) protein is Methionyl-tRNA formyltransferase.